Consider the following 209-residue polypeptide: Glycerol-3-phosphate acyltransferase (209 aa).

5 consecutive transmembrane segments (helical) span residues 4-24, 53-75, 80-102, 112-132, and 138-158; these read IAIG…AILI, LAAA…IGYG, PFWL…FFHF, LGAI…TWLL, and GYSS…VWWF.

It belongs to the PlsY family. In terms of assembly, probably interacts with PlsX.

The protein localises to the cell inner membrane. It carries out the reaction an acyl phosphate + sn-glycerol 3-phosphate = a 1-acyl-sn-glycero-3-phosphate + phosphate. The protein operates within lipid metabolism; phospholipid metabolism. Its function is as follows. Catalyzes the transfer of an acyl group from acyl-phosphate (acyl-PO(4)) to glycerol-3-phosphate (G3P) to form lysophosphatidic acid (LPA). This enzyme utilizes acyl-phosphate as fatty acyl donor, but not acyl-CoA or acyl-ACP. This is Glycerol-3-phosphate acyltransferase from Sodalis glossinidius (strain morsitans).